The chain runs to 176 residues: Co-chaperone protein HscB homolog (176 aa).

A J domain is found at 8–80 (DFFALFGLPV…LRRATYLLKL (73 aa)).

This sequence belongs to the HscB family. Interacts with HscA and stimulates its ATPase activity.

Co-chaperone involved in the maturation of iron-sulfur cluster-containing proteins. Seems to help targeting proteins to be folded toward HscA. This chain is Co-chaperone protein HscB homolog, found in Cupriavidus taiwanensis (strain DSM 17343 / BCRC 17206 / CCUG 44338 / CIP 107171 / LMG 19424 / R1) (Ralstonia taiwanensis (strain LMG 19424)).